A 227-amino-acid chain; its full sequence is MAFLILLRHGKSVWNEKNLFTGWVDIPLSQKGIDEAILAGQVIKDLPIDCIFTSSLVRSLMTALLAMTHHSSKKVPYIIHDAPQQKQMSRIYSEEEQHMIPLYRSSALNERMYGELQGKNKQETAEQFGEEQVKLWRRSYKIAPPKGESLYDTGQRTIPYFQETIFPLLQNSKNVFISAHGNSLRSLIMDIEKLSEEEVLSLELPTGKPLVYLWTGHTFERRPEPFG.

Substrate-binding positions include R8 to N15, T21 to G22, R58, E110 to Y113, K121, R137 to R138, and G181 to N182. H9 acts as the Tele-phosphohistidine intermediate in catalysis. The active-site Proton donor/acceptor is E110.

The protein belongs to the phosphoglycerate mutase family. BPG-dependent PGAM subfamily.

The catalysed reaction is (2R)-2-phosphoglycerate = (2R)-3-phosphoglycerate. The protein operates within carbohydrate degradation; glycolysis; pyruvate from D-glyceraldehyde 3-phosphate: step 3/5. Catalyzes the interconversion of 2-phosphoglycerate and 3-phosphoglycerate. The chain is 2,3-bisphosphoglycerate-dependent phosphoglycerate mutase from Chlamydia felis (strain Fe/C-56) (Chlamydophila felis).